The following is a 241-amino-acid chain: Uridylate kinase (241 aa).

12 to 15 serves as a coordination point for ATP; the sequence is KLSG. The involved in allosteric activation by GTP stretch occupies residues 20 to 25; the sequence is GATGYG. Position 54 (glycine 54) interacts with UMP. ATP contacts are provided by glycine 55 and arginine 59. UMP-binding positions include aspartate 74 and 135–142; that span reads TGNPYMTT. The ATP site is built by asparagine 163, tyrosine 169, and aspartate 172.

The protein belongs to the UMP kinase family. Homohexamer.

Its subcellular location is the cytoplasm. It carries out the reaction UMP + ATP = UDP + ADP. Its pathway is pyrimidine metabolism; CTP biosynthesis via de novo pathway; UDP from UMP (UMPK route): step 1/1. Allosterically activated by GTP. Inhibited by UTP. Its function is as follows. Catalyzes the reversible phosphorylation of UMP to UDP. The protein is Uridylate kinase of Dehalococcoides mccartyi (strain CBDB1).